The following is a 61-amino-acid chain: SPbeta prophage-derived uncharacterized protein YotK (61 aa).

The stretch at 7-57 (SIQTLLNKMDRQMKTVKEAIEEKDLQRAHRNLINLADNNEELMQEIRWVKK) forms a coiled coil.

This is SPbeta prophage-derived uncharacterized protein YotK (yotK) from Bacillus subtilis (strain 168).